A 99-amino-acid polypeptide reads, in one-letter code: (4S)-4-hydroxy-5-phosphonooxypentane-2,3-dione isomerase (99 aa).

Positions His2–Phe91 constitute an ABM domain.

The protein belongs to the LsrG family. In terms of assembly, homodimer.

Its subcellular location is the cytoplasm. The enzyme catalyses (2S)-2-hydroxy-3,4-dioxopentyl phosphate = 3-hydroxy-2,4-dioxopentyl phosphate. Functionally, involved in the degradation of phospho-AI-2, thereby terminating induction of the lsr operon and closing the AI-2 signaling cycle. Catalyzes the conversion of (4S)-4-hydroxy-5-phosphonooxypentane-2,3-dione (P-DPD) to 3-hydroxy-5-phosphonooxypentane-2,4-dione (P-HPD). The chain is (4S)-4-hydroxy-5-phosphonooxypentane-2,3-dione isomerase from Photorhabdus laumondii subsp. laumondii (strain DSM 15139 / CIP 105565 / TT01) (Photorhabdus luminescens subsp. laumondii).